A 541-amino-acid chain; its full sequence is Atlastin-3 (541 aa).

Residues 1 to 25 form an N-terminal hypervariable region (HVR) region; it reads MLSPQRVAAAASRGADDAMESSKPG. At 1 to 445 the chain is on the cytoplasmic side; sequence MLSPQRVAAA…NVFSTFRTPA (445 aa). Residues 57–305 form the GB1/RHD3-type G domain; sequence DLDVVVVSVA…LIPYVLNPSK (249 aa). 7 residues coordinate GDP: Arg70, Lys71, Gly72, Lys73, Ser74, Phe75, and Arg109. Asp142 contributes to the Mg(2+) binding site. GDP-binding residues include Arg213, Asp214, Val272, and Ser275. Positions 343-434 are 3HB (three-helix bundle) domain; that stretch reads MLQATAEANN…YENFCKHNGS (92 aa). Lys391 carries the post-translational modification N6-acetyllysine. Residues 446 to 466 form a helical membrane-spanning segment; that stretch reads VLFTGIVALYIASGLTGFIGL. A topological domain (lumenal) is located at residue Glu467. The helical transmembrane segment at 468 to 488 threads the bilayer; sequence VVAQLFNCMVGLLLIALLTWG. The Cytoplasmic portion of the chain corresponds to 489–541; that stretch reads YIRYSGQYRELGGAIDFGAAYVLEQASSHIGNSTQATVRDAVVGRPSMDKKAQ. Residue Ser535 is modified to Phosphoserine.

It belongs to the TRAFAC class dynamin-like GTPase superfamily. GB1/RHD3 GTPase family. GB1 subfamily. In terms of assembly, monomeric and homodimeric. The homodimer, transiently formed by two molecules on opposing membranes, is the active form mediating ER membrane fusion. Interacts with ZFYVE27; both proteins are involved in endoplasmic reticulum tubular network organization. Interacts with REEP5; both proteins are involved in endoplasmic reticulum tubular network organization. As to expression, expressed in the central nervous system and in dorsal root ganglia neurons. Expressed in peripheral tissues (at protein level).

The protein resides in the endoplasmic reticulum membrane. It carries out the reaction GTP + H2O = GDP + phosphate + H(+). Its function is as follows. Atlastin-3 (ATL3) is a membrane-anchored GTPase that mediates the GTP-dependent fusion of endoplasmic reticulum (ER) membranes, maintaining the continuous ER network. It facilitates the formation of three-way junctions where ER tubules intersect. Two atlastin-3 on neighboring ER tubules bind GTP and form loose homodimers through the GB1/RHD3-type G domains and 3HB regions. Upon GTP hydrolysis, the 3HB regions tighten, pulling the membranes together to drive their fusion. After fusion, the homodimer disassembles upon release of inorganic phosphate (Pi). Subsequently, GDP dissociates, resetting the monomers to a conformation ready for a new fusion cycle. The chain is Atlastin-3 from Homo sapiens (Human).